The sequence spans 530 residues: NADH-quinone oxidoreductase subunit C/D (530 aa).

The NADH dehydrogenase I subunit C stretch occupies residues 1 to 144 (MEEIKYIEPA…NPLRMDNEET (144 aa)). Positions 171–530 (EYVVNIGPQH…LDYVVPDIDR (360 aa)) are NADH dehydrogenase I subunit D.

The protein in the N-terminal section; belongs to the complex I 30 kDa subunit family. It in the C-terminal section; belongs to the complex I 49 kDa subunit family. As to quaternary structure, NDH-1 is composed of 13 different subunits. Subunits NuoB, CD, E, F, and G constitute the peripheral sector of the complex.

The protein resides in the cell inner membrane. The enzyme catalyses a quinone + NADH + 5 H(+)(in) = a quinol + NAD(+) + 4 H(+)(out). Its function is as follows. NDH-1 shuttles electrons from NADH, via FMN and iron-sulfur (Fe-S) centers, to quinones in the respiratory chain. The immediate electron acceptor for the enzyme in this species is believed to be a menaquinone. Couples the redox reaction to proton translocation (for every two electrons transferred, four hydrogen ions are translocated across the cytoplasmic membrane), and thus conserves the redox energy in a proton gradient. The chain is NADH-quinone oxidoreductase subunit C/D from Bacteroides fragilis (strain ATCC 25285 / DSM 2151 / CCUG 4856 / JCM 11019 / LMG 10263 / NCTC 9343 / Onslow / VPI 2553 / EN-2).